We begin with the raw amino-acid sequence, 96 residues long: Aspartyl/glutamyl-tRNA(Asn/Gln) amidotransferase subunit C (96 aa).

Belongs to the GatC family. In terms of assembly, heterotrimer of A, B and C subunits.

The enzyme catalyses L-glutamyl-tRNA(Gln) + L-glutamine + ATP + H2O = L-glutaminyl-tRNA(Gln) + L-glutamate + ADP + phosphate + H(+). The catalysed reaction is L-aspartyl-tRNA(Asn) + L-glutamine + ATP + H2O = L-asparaginyl-tRNA(Asn) + L-glutamate + ADP + phosphate + 2 H(+). Functionally, allows the formation of correctly charged Asn-tRNA(Asn) or Gln-tRNA(Gln) through the transamidation of misacylated Asp-tRNA(Asn) or Glu-tRNA(Gln) in organisms which lack either or both of asparaginyl-tRNA or glutaminyl-tRNA synthetases. The reaction takes place in the presence of glutamine and ATP through an activated phospho-Asp-tRNA(Asn) or phospho-Glu-tRNA(Gln). The chain is Aspartyl/glutamyl-tRNA(Asn/Gln) amidotransferase subunit C from Bacillus cytotoxicus (strain DSM 22905 / CIP 110041 / 391-98 / NVH 391-98).